A 379-amino-acid chain; its full sequence is Glucose-1-phosphate adenylyltransferase (379 aa).

Alpha-D-glucose 1-phosphate is bound by residues Tyr-99, Gly-164, 179-180 (EK), and Ser-190.

It belongs to the bacterial/plant glucose-1-phosphate adenylyltransferase family. In terms of assembly, homotetramer.

It catalyses the reaction alpha-D-glucose 1-phosphate + ATP + H(+) = ADP-alpha-D-glucose + diphosphate. Its pathway is glycan biosynthesis; glycogen biosynthesis. Functionally, involved in the biosynthesis of ADP-glucose, a building block required for the elongation reactions to produce glycogen. Catalyzes the reaction between ATP and alpha-D-glucose 1-phosphate (G1P) to produce pyrophosphate and ADP-Glc. The chain is Glucose-1-phosphate adenylyltransferase from Bacillus licheniformis (strain ATCC 14580 / DSM 13 / JCM 2505 / CCUG 7422 / NBRC 12200 / NCIMB 9375 / NCTC 10341 / NRRL NRS-1264 / Gibson 46).